The primary structure comprises 75 residues: Small ribosomal subunit protein bS18 (75 aa).

It belongs to the bacterial ribosomal protein bS18 family. As to quaternary structure, part of the 30S ribosomal subunit. Forms a tight heterodimer with protein bS6.

Functionally, binds as a heterodimer with protein bS6 to the central domain of the 16S rRNA, where it helps stabilize the platform of the 30S subunit. This chain is Small ribosomal subunit protein bS18, found in Acinetobacter baylyi (strain ATCC 33305 / BD413 / ADP1).